Here is a 124-residue protein sequence, read N- to C-terminus: Secretion system apparatus protein SsaP (124 aa).

The polypeptide is Secretion system apparatus protein SsaP (ssaP) (Salmonella typhi).